The sequence spans 845 residues: Protein translocase subunit SecA 1 (845 aa).

ATP is bound by residues Gln91, Gly109 to Thr113, and Asp498. Residues Thr795–Glu845 are disordered. Cys829, Cys831, Cys840, and His841 together coordinate Zn(2+). Positions Lys835–Glu845 are enriched in basic residues.

The protein belongs to the SecA family. As to quaternary structure, monomer and homodimer. Part of the essential Sec protein translocation apparatus which comprises SecA, SecYEG and auxiliary proteins SecDF. Other proteins may also be involved. Zn(2+) is required as a cofactor.

The protein localises to the cell membrane. Its subcellular location is the cytoplasm. It catalyses the reaction ATP + H2O + cellular proteinSide 1 = ADP + phosphate + cellular proteinSide 2.. Functionally, part of the Sec protein translocase complex. Interacts with the SecYEG preprotein conducting channel. Has a central role in coupling the hydrolysis of ATP to the transfer of proteins into and across the cell membrane, serving as an ATP-driven molecular motor driving the stepwise translocation of polypeptide chains across the membrane. This chain is Protein translocase subunit SecA 1, found in Staphylococcus haemolyticus (strain JCSC1435).